The chain runs to 487 residues: Acetyl-coenzyme A carboxylase carboxyl transferase subunit beta, chloroplastic (487 aa).

The CoA carboxyltransferase N-terminal domain maps to 223–487; that stretch reads LWIQCDNCYG…FFPLKKNEIK (265 aa). Positions 227, 230, 243, and 246 each coordinate Zn(2+). The segment at 227–246 adopts a C4-type zinc-finger fold; the sequence is CDNCYGLMYKKVKMNVCEQC.

It belongs to the AccD/PCCB family. As to quaternary structure, acetyl-CoA carboxylase is a heterohexamer composed of biotin carboxyl carrier protein, biotin carboxylase and 2 subunits each of ACCase subunit alpha and ACCase plastid-coded subunit beta (accD). Zn(2+) is required as a cofactor.

It is found in the plastid. The protein localises to the chloroplast stroma. The catalysed reaction is N(6)-carboxybiotinyl-L-lysyl-[protein] + acetyl-CoA = N(6)-biotinyl-L-lysyl-[protein] + malonyl-CoA. It functions in the pathway lipid metabolism; malonyl-CoA biosynthesis; malonyl-CoA from acetyl-CoA: step 1/1. Component of the acetyl coenzyme A carboxylase (ACC) complex. Biotin carboxylase (BC) catalyzes the carboxylation of biotin on its carrier protein (BCCP) and then the CO(2) group is transferred by the transcarboxylase to acetyl-CoA to form malonyl-CoA. The protein is Acetyl-coenzyme A carboxylase carboxyl transferase subunit beta, chloroplastic of Lepidium virginicum (Virginia pepperweed).